Consider the following 412-residue polypeptide: Aspartate aminotransferase, cytoplasmic (412 aa).

Alanine 2 carries the N-acetylalanine modification. The L-aspartate site is built by glycine 38, tryptophan 140, and asparagine 194. Lysine 258 bears the N6-(pyridoxal phosphate)lysine mark. Arginine 386 lines the L-aspartate pocket.

This sequence belongs to the class-I pyridoxal-phosphate-dependent aminotransferase family. As to quaternary structure, homodimer. It depends on pyridoxal 5'-phosphate as a cofactor.

The protein resides in the cytoplasm. It catalyses the reaction L-aspartate + 2-oxoglutarate = oxaloacetate + L-glutamate. The enzyme catalyses L-cysteine + 2-oxoglutarate = 2-oxo-3-sulfanylpropanoate + L-glutamate. It carries out the reaction (2S)-2-aminobutanoate + 2-oxoglutarate = 2-oxobutanoate + L-glutamate. The catalysed reaction is 3-sulfino-L-alanine + 2-oxoglutarate = 3-sulfinopyruvate + L-glutamate. Functionally, biosynthesis of L-glutamate from L-aspartate or L-cysteine. Important regulator of levels of glutamate, the major excitatory neurotransmitter of the vertebrate central nervous system. Acts as a scavenger of glutamate in brain neuroprotection. The aspartate aminotransferase activity is involved in hepatic glucose synthesis during development and in adipocyte glyceroneogenesis. Using L-cysteine as substrate, regulates levels of mercaptopyruvate, an important source of hydrogen sulfide. Mercaptopyruvate is converted into H(2)S via the action of 3-mercaptopyruvate sulfurtransferase (3MST). Hydrogen sulfide is an important synaptic modulator and neuroprotectant in the brain. The sequence is that of Aspartate aminotransferase, cytoplasmic from Gallus gallus (Chicken).